Reading from the N-terminus, the 183-residue chain is Bifunctional protein PyrR (183 aa).

The PRPP-binding motif lies at 102–114 (VVLVDDVLYTGRT).

Belongs to the purine/pyrimidine phosphoribosyltransferase family. PyrR subfamily. In terms of assembly, homodimer and homohexamer; in equilibrium.

The catalysed reaction is UMP + diphosphate = 5-phospho-alpha-D-ribose 1-diphosphate + uracil. Regulates transcriptional attenuation of the pyrimidine nucleotide (pyr) operon by binding in a uridine-dependent manner to specific sites on pyr mRNA. This disrupts an antiterminator hairpin in the RNA and favors formation of a downstream transcription terminator, leading to a reduced expression of downstream genes. In terms of biological role, also displays a weak uracil phosphoribosyltransferase activity which is not physiologically significant. This chain is Bifunctional protein PyrR, found in Listeria monocytogenes serotype 4a (strain HCC23).